The chain runs to 174 residues: Large ribosomal subunit protein uL5 (174 aa).

It belongs to the universal ribosomal protein uL5 family. Part of the 50S ribosomal subunit; contacts the 5S rRNA and probably tRNA. Forms a bridge to the 30S subunit in the 70S ribosome.

Its function is as follows. This is one of the proteins that bind and probably mediate the attachment of the 5S RNA into the large ribosomal subunit, where it forms part of the central protuberance. In the 70S ribosome it contacts protein S13 of the 30S subunit (bridge B1b), connecting the 2 subunits; this bridge is implicated in subunit movement. May contact the P site tRNA; the 5S rRNA and some of its associated proteins might help stabilize positioning of ribosome-bound tRNAs. This Halorubrum lacusprofundi (strain ATCC 49239 / DSM 5036 / JCM 8891 / ACAM 34) protein is Large ribosomal subunit protein uL5.